A 420-amino-acid chain; its full sequence is Serine hydroxymethyltransferase (420 aa).

(6S)-5,6,7,8-tetrahydrofolate contacts are provided by residues Leu-118 and 122-124; that span reads GHL. Lys-227 carries the N6-(pyridoxal phosphate)lysine modification.

It belongs to the SHMT family. Homodimer. The cofactor is pyridoxal 5'-phosphate.

Its subcellular location is the cytoplasm. The enzyme catalyses (6R)-5,10-methylene-5,6,7,8-tetrahydrofolate + glycine + H2O = (6S)-5,6,7,8-tetrahydrofolate + L-serine. The protein operates within one-carbon metabolism; tetrahydrofolate interconversion. It participates in amino-acid biosynthesis; glycine biosynthesis; glycine from L-serine: step 1/1. Its function is as follows. Catalyzes the reversible interconversion of serine and glycine with tetrahydrofolate (THF) serving as the one-carbon carrier. This reaction serves as the major source of one-carbon groups required for the biosynthesis of purines, thymidylate, methionine, and other important biomolecules. Also exhibits THF-independent aldolase activity toward beta-hydroxyamino acids, producing glycine and aldehydes, via a retro-aldol mechanism. The protein is Serine hydroxymethyltransferase of Persephonella marina (strain DSM 14350 / EX-H1).